Reading from the N-terminus, the 139-residue chain is Histone H2A (139 aa).

Residues 1-27 (MSGKGKAGKSGGKAGSETKSMSRSSKA) form a disordered region. Position 2 is an N-acetylserine (Ser-2). Lys-9 and Lys-13 each carry N6-acetyllysine. Polar residues predominate over residues 17-27 (ETKSMSRSSKA). At Gln-110 the chain carries N5-methylglutamine. The tract at residues 119–139 (PELLPSKSSKGKKDEGVSQEL) is disordered. Over residues 129–139 (GKKDEGVSQEL) the composition is skewed to basic and acidic residues. Phosphoserine is present on Ser-136. The [ST]-Q motif motif lies at 136 to 137 (SQ).

This sequence belongs to the histone H2A family. As to quaternary structure, the nucleosome is a histone octamer containing two molecules each of H2A, H2B, H3 and H4 assembled in one H3-H4 heterotetramer and two H2A-H2B heterodimers. The octamer wraps approximately 147 bp of DNA. In terms of processing, phosphorylated to form H2AS128ph (gamma-H2A) in response to DNA double-strand breaks (DSBs) generated by exogenous genotoxic agents and by stalled replication forks. Phosphorylation is dependent on the DNA damage checkpoint kinases MEC1/ATR and TEL1/ATM, spreads on either side of a detected DSB site and may mark the surrounding chromatin for recruitment of proteins required for DNA damage signaling and repair. Gamma-H2A is removed from the DNA prior to the strand invasion-primer extension step of the repair process and subsequently dephosphorylated. Dephosphorylation is necessary for efficient recovery from the DNA damage checkpoint. Acetylated by ESA1 to form H2AK4ac and H2AK7ac.

The protein resides in the nucleus. Its subcellular location is the chromosome. Functionally, core component of nucleosome which plays a central role in DNA double strand break (DSB) repair. Nucleosomes wrap and compact DNA into chromatin, limiting DNA accessibility to the cellular machineries which require DNA as a template. Histones thereby play a central role in transcription regulation, DNA repair, DNA replication and chromosomal stability. DNA accessibility is regulated via a complex set of post-translational modifications of histones, also called histone code, and nucleosome remodeling. This Agaricus bisporus (White button mushroom) protein is Histone H2A.